The primary structure comprises 128 residues: Small ribosomal subunit protein uS12 (128 aa).

At D89 the chain carries 3-methylthioaspartic acid.

The protein belongs to the universal ribosomal protein uS12 family. Part of the 30S ribosomal subunit. Contacts proteins S8 and S17. May interact with IF1 in the 30S initiation complex.

Its function is as follows. With S4 and S5 plays an important role in translational accuracy. Functionally, interacts with and stabilizes bases of the 16S rRNA that are involved in tRNA selection in the A site and with the mRNA backbone. Located at the interface of the 30S and 50S subunits, it traverses the body of the 30S subunit contacting proteins on the other side and probably holding the rRNA structure together. The combined cluster of proteins S8, S12 and S17 appears to hold together the shoulder and platform of the 30S subunit. The protein is Small ribosomal subunit protein uS12 of Campylobacter jejuni subsp. doylei (strain ATCC BAA-1458 / RM4099 / 269.97).